The following is a 146-amino-acid chain: Cytidine deaminase (146 aa).

In terms of domain architecture, CMP/dCMP-type deaminase spans 13 to 140 (ECVQQLLVCS…ELLPSSFGPE (128 aa)). 54–60 (NIENACY) provides a ligand contact to substrate. C65 contacts Zn(2+). E67 (proton donor) is an active-site residue. Residues C99 and C102 each contribute to the Zn(2+) site.

This sequence belongs to the cytidine and deoxycytidylate deaminase family. In terms of assembly, homotetramer. It depends on Zn(2+) as a cofactor. In terms of tissue distribution, highly expressed in granulocytes while expression is very low in fibroblasts, chondrocytes, monocytes, and T- as well as B-cell lines.

It catalyses the reaction cytidine + H2O + H(+) = uridine + NH4(+). The enzyme catalyses 2'-deoxycytidine + H2O + H(+) = 2'-deoxyuridine + NH4(+). Its function is as follows. This enzyme scavenges exogenous and endogenous cytidine and 2'-deoxycytidine for UMP synthesis. The protein is Cytidine deaminase of Homo sapiens (Human).